The following is a 366-amino-acid chain: Tetraacyldisaccharide 4'-kinase (366 aa).

51–58 contacts ATP; sequence TVGGTGKT.

Belongs to the LpxK family.

It carries out the reaction a lipid A disaccharide + ATP = a lipid IVA + ADP + H(+). The protein operates within glycolipid biosynthesis; lipid IV(A) biosynthesis; lipid IV(A) from (3R)-3-hydroxytetradecanoyl-[acyl-carrier-protein] and UDP-N-acetyl-alpha-D-glucosamine: step 6/6. Transfers the gamma-phosphate of ATP to the 4'-position of a tetraacyldisaccharide 1-phosphate intermediate (termed DS-1-P) to form tetraacyldisaccharide 1,4'-bis-phosphate (lipid IVA). In Phocaeicola vulgatus (strain ATCC 8482 / DSM 1447 / JCM 5826 / CCUG 4940 / NBRC 14291 / NCTC 11154) (Bacteroides vulgatus), this protein is Tetraacyldisaccharide 4'-kinase.